The primary structure comprises 244 residues: Carbonic anhydrase (244 aa).

The first 19 residues, methionine 1–alanine 19, serve as a signal peptide directing secretion. Positions valine 23–histidine 244 constitute an Alpha-carbonic anhydrase domain. Cysteine 46 and cysteine 199 form a disulfide bridge. The active-site Proton acceptor is histidine 84. Positions 109, 111, and 128 each coordinate Zn(2+). A substrate-binding site is contributed by threonine 195–threonine 196.

It belongs to the alpha-carbonic anhydrase family. Requires Zn(2+) as cofactor.

It is found in the periplasm. The catalysed reaction is hydrogencarbonate + H(+) = CO2 + H2O. Functionally, reversible hydration of carbon dioxide. The protein is Carbonic anhydrase (cah) of Pectobacterium carotovorum (Erwinia carotovora).